A 377-amino-acid polypeptide reads, in one-letter code: Secreted LysM effector Lys2 (377 aa).

The signal sequence occupies residues 1–22; sequence MVRQSIGLIALQLLNLVSVAQA. The span at 104–119 shows a compositional bias: low complexity; sequence TSSSTATTTSQKPTAT. The segment at 104–124 is disordered; it reads TSSSTATTTSQKPTATVSPLP. LysM domains follow at residues 135–182 and 207–253; these read KYYN…YVCV and KYYK…YYCV.

It belongs to the secreted LysM effector family.

Might have a role in sequestration of chitin oligosaccharides (breakdown products of fungal cell walls that are released during invasion and act as triggers of host immunity) to dampen host defense. The sequence is that of Secreted LysM effector Lys2 from Pochonia chlamydosporia (strain 123) (Metacordyceps chlamydosporia).